Here is a 352-residue protein sequence, read N- to C-terminus: UDP-N-acetylglucosamine--N-acetylmuramyl-(pentapeptide) pyrophosphoryl-undecaprenol N-acetylglucosamine transferase (352 aa).

Residues Ser195 and Gln287 each coordinate UDP-N-acetyl-alpha-D-glucosamine.

The protein belongs to the glycosyltransferase 28 family. MurG subfamily.

It is found in the cell membrane. The enzyme catalyses Mur2Ac(oyl-L-Ala-gamma-D-Glu-L-Lys-D-Ala-D-Ala)-di-trans,octa-cis-undecaprenyl diphosphate + UDP-N-acetyl-alpha-D-glucosamine = beta-D-GlcNAc-(1-&gt;4)-Mur2Ac(oyl-L-Ala-gamma-D-Glu-L-Lys-D-Ala-D-Ala)-di-trans,octa-cis-undecaprenyl diphosphate + UDP + H(+). Its pathway is cell wall biogenesis; peptidoglycan biosynthesis. Cell wall formation. Catalyzes the transfer of a GlcNAc subunit on undecaprenyl-pyrophosphoryl-MurNAc-pentapeptide (lipid intermediate I) to form undecaprenyl-pyrophosphoryl-MurNAc-(pentapeptide)GlcNAc (lipid intermediate II). This Streptococcus pneumoniae (strain JJA) protein is UDP-N-acetylglucosamine--N-acetylmuramyl-(pentapeptide) pyrophosphoryl-undecaprenol N-acetylglucosamine transferase.